A 58-amino-acid chain; its full sequence is MLRDIAFEFFIMIALGIFIGYIIAEYTDNNLWIVVFLLLGIFCAFGRLFKMIKDYEKR.

The next 2 helical transmembrane spans lie at 5-25 (IAFE…IIAE) and 32-52 (WIVV…FKMI).

The protein resides in the cell membrane. This is an uncharacterized protein from Methanocaldococcus jannaschii (strain ATCC 43067 / DSM 2661 / JAL-1 / JCM 10045 / NBRC 100440) (Methanococcus jannaschii).